The primary structure comprises 294 residues: Proline iminopeptidase (294 aa).

In terms of domain architecture, AB hydrolase-1 spans 27–277 (PPLVLLHGGP…GCGHMSFVEK (251 aa)). The Nucleophile role is filled by Ser105. The active site involves Asp244. The Proton donor role is filled by His271.

Belongs to the peptidase S33 family.

The protein localises to the cell envelope. It carries out the reaction Release of N-terminal proline from a peptide.. Functionally, releases the N-terminal proline from various substrates. This is Proline iminopeptidase from Lactobacillus helveticus (strain DPC 4571).